The sequence spans 363 residues: Histidinol-phosphate aminotransferase (363 aa).

Residue lysine 220 is modified to N6-(pyridoxal phosphate)lysine.

The protein belongs to the class-II pyridoxal-phosphate-dependent aminotransferase family. Histidinol-phosphate aminotransferase subfamily. Homodimer. It depends on pyridoxal 5'-phosphate as a cofactor.

It carries out the reaction L-histidinol phosphate + 2-oxoglutarate = 3-(imidazol-4-yl)-2-oxopropyl phosphate + L-glutamate. It functions in the pathway amino-acid biosynthesis; L-histidine biosynthesis; L-histidine from 5-phospho-alpha-D-ribose 1-diphosphate: step 7/9. This chain is Histidinol-phosphate aminotransferase, found in Paramagnetospirillum magneticum (strain ATCC 700264 / AMB-1) (Magnetospirillum magneticum).